Here is a 305-residue protein sequence, read N- to C-terminus: Sulfate adenylyltransferase subunit 2 (305 aa).

Belongs to the PAPS reductase family. CysD subfamily. Heterodimer composed of CysD, the smaller subunit, and CysN.

The enzyme catalyses sulfate + ATP + H(+) = adenosine 5'-phosphosulfate + diphosphate. It participates in sulfur metabolism; hydrogen sulfide biosynthesis; sulfite from sulfate: step 1/3. Its function is as follows. With CysN forms the ATP sulfurylase (ATPS) that catalyzes the adenylation of sulfate producing adenosine 5'-phosphosulfate (APS) and diphosphate, the first enzymatic step in sulfur assimilation pathway. APS synthesis involves the formation of a high-energy phosphoric-sulfuric acid anhydride bond driven by GTP hydrolysis by CysN coupled to ATP hydrolysis by CysD. In Pseudomonas putida (strain ATCC 700007 / DSM 6899 / JCM 31910 / BCRC 17059 / LMG 24140 / F1), this protein is Sulfate adenylyltransferase subunit 2.